A 624-amino-acid polypeptide reads, in one-letter code: MTEADSSATPLARGVEVIAQVVATLPLSPGVYRMLSGKGDVLYVGKAKSLKKRVVAYTRPDRMPLRIQRMIAETASMEVVTTRTEVEALLLESNLIKSLGPRYNILLKDDKTFPHILITADHDWPQVLKHRGARNRKGEYFGPFASAGAVNQTLAALQRAFLLRSCSDSVFASRTRPCLLFQIKRCSAPCVERIDRDEYLALVEEARAFLSGQSRRVQHDLTARMESAAEAMEYEAAAVFRDRIRALTRIQAHQDINPAEVEEADVVALHQAGDGVCIQVFFFRSGCNYGNRAYFPVHAQGEEAPQIMAAFLGQFYADKTPPREILLSLEPDEVAIVAQALSEKAGRKVTLSVPKRGDRKRLVEHAHDNARDALGRRMAESGAQRKLLEGVAELFGMESAPERIEVYDNSHIQGSDAVGAMIVAGPDGLMKSAYRKFNIRSTDLTPGDDFGMMREVLTRRFARAQKEDPDRDRGLWPDLALIDGGRGQLNAALGVLAELGIDDVMLVGIAKGPDRNAGRERFFLAGKEPISLESRHPVLYFLQRLRDEAHRFAIGTHRARRSKGLVQSTLDALPGIGPKRKKALLHHFGSARAVAEAGLPDLESVEGISHAMAKKIHDYFHPEG.

A GIY-YIG domain is found at 27-105 (LSPGVYRMLS…IKSLGPRYNI (79 aa)). Residues 215–250 (RRVQHDLTARMESAAEAMEYEAAAVFRDRIRALTRI) enclose the UVR domain.

Belongs to the UvrC family. In terms of assembly, interacts with UvrB in an incision complex.

It localises to the cytoplasm. Its function is as follows. The UvrABC repair system catalyzes the recognition and processing of DNA lesions. UvrC both incises the 5' and 3' sides of the lesion. The N-terminal half is responsible for the 3' incision and the C-terminal half is responsible for the 5' incision. In Paramagnetospirillum magneticum (strain ATCC 700264 / AMB-1) (Magnetospirillum magneticum), this protein is UvrABC system protein C.